Here is a 439-residue protein sequence, read N- to C-terminus: Ribosomal protein uS12 methylthiotransferase RimO (439 aa).

One can recognise an MTTase N-terminal domain in the interval 6–116 (GKVGFVSLGC…VMNQVHQVAP (111 aa)). [4Fe-4S] cluster-binding residues include Cys-15, Cys-51, Cys-80, Cys-148, Cys-152, and Cys-155. The region spanning 134 to 371 (LTPKHYAYLK…MEVQQRISAS (238 aa)) is the Radical SAM core domain. The TRAM domain occupies 374 to 439 (QAKIGKRMDV…DEYDLWGRPV (66 aa)).

The protein belongs to the methylthiotransferase family. RimO subfamily. The cofactor is [4Fe-4S] cluster.

Its subcellular location is the cytoplasm. The enzyme catalyses L-aspartate(89)-[ribosomal protein uS12]-hydrogen + (sulfur carrier)-SH + AH2 + 2 S-adenosyl-L-methionine = 3-methylsulfanyl-L-aspartate(89)-[ribosomal protein uS12]-hydrogen + (sulfur carrier)-H + 5'-deoxyadenosine + L-methionine + A + S-adenosyl-L-homocysteine + 2 H(+). Catalyzes the methylthiolation of an aspartic acid residue of ribosomal protein uS12. This chain is Ribosomal protein uS12 methylthiotransferase RimO, found in Hahella chejuensis (strain KCTC 2396).